The following is a 555-amino-acid chain: Potassium-transporting ATPase potassium-binding subunit (555 aa).

Transmembrane regions (helical) follow at residues 2–22, 60–80, 130–150, 173–193, 246–266, 278–298, 374–394, 412–432, 483–503, and 525–545; these read IWVAVVITMLLFILVAKPTGI, QYALSLVLLNGFMIVVVYFIF, IGITFLMFAAPATTLALVMAF, VFLPIAFMAALVFVALGVPQT, MSNILQMMLMMLLPTALPFTY, ILFVSLFMVFLLGFITITTSE, AGFVNIIMYAIIAVFISGLMV, LIAVTILFHPLLILGFSALAL, LVMFLGRYFSLITMLAVAASL, and GIFIGTIVIVGALTFFPMLVL.

It belongs to the KdpA family. The system is composed of three essential subunits: KdpA, KdpB and KdpC.

It localises to the cell membrane. Functionally, part of the high-affinity ATP-driven potassium transport (or Kdp) system, which catalyzes the hydrolysis of ATP coupled with the electrogenic transport of potassium into the cytoplasm. This subunit binds the extracellular potassium ions and delivers the ions to the membrane domain of KdpB through an intramembrane tunnel. This Bacillus cereus (strain Q1) protein is Potassium-transporting ATPase potassium-binding subunit.